Consider the following 132-residue polypeptide: Group 2 truncated hemoglobin YjbI (132 aa).

4 residues coordinate heme: T45, K48, Y63, and H76.

Belongs to the truncated hemoglobin family. Group II subfamily. As to quaternary structure, monomer. Heme serves as cofactor.

Hemoglobin-like protein that exhibits a low peroxidase activity. Its very high oxygen affinity may rule out the possibility that it is involved in oxygen transport. The protein is Group 2 truncated hemoglobin YjbI (yjbI) of Bacillus subtilis (strain 168).